Here is a 488-residue protein sequence, read N- to C-terminus: Probable apyrase 5 (488 aa).

Residues 1 to 26 (MDALKVQILPDNQSSPSSTHMLTKPK) are disordered. The Cytoplasmic portion of the chain corresponds to 1–32 (MDALKVQILPDNQSSPSSTHMLTKPKSKKATK). Over residues 10 to 21 (PDNQSSPSSTHM) the composition is skewed to polar residues. The chain crosses the membrane as a helical; Signal-anchor for type II membrane protein span at residues 33–53 (SIAMLIVASLAITLGLLFVFS). At 54 to 488 (SNSVMFSASF…GKSRKMIGFK (435 aa)) the chain is on the extracellular side. 73 to 83 (VIIDAGSSGTR) serves as a coordination point for ATP. Glutamate 196 (proton acceptor) is an active-site residue. 220–230 (GIVELGGASAQ) contacts ATP. A glycan (N-linked (GlcNAc...) asparagine) is linked at asparagine 251.

This sequence belongs to the GDA1/CD39 NTPase family. It depends on Ca(2+) as a cofactor. As to expression, highly expressed in young rosette leaves but only weakly in roots.

The protein localises to the membrane. The catalysed reaction is a ribonucleoside 5'-triphosphate + 2 H2O = a ribonucleoside 5'-phosphate + 2 phosphate + 2 H(+). In terms of biological role, catalyzes the hydrolysis of phosphoanhydride bonds of nucleoside tri- and di-phosphates. The chain is Probable apyrase 5 (APY5) from Arabidopsis thaliana (Mouse-ear cress).